The chain runs to 256 residues: Geranylgeranylglyceryl phosphate synthase (256 aa).

Residues D28 and S53 each coordinate Mg(2+). Sn-glycerol 1-phosphate-binding positions include 172–178, 203–204, and 225–226; these read YLEAGSG, GG, and GT.

It belongs to the GGGP/HepGP synthase family. Group II subfamily. Requires Mg(2+) as cofactor.

The protein localises to the cytoplasm. It catalyses the reaction sn-glycerol 1-phosphate + (2E,6E,10E)-geranylgeranyl diphosphate = sn-3-O-(geranylgeranyl)glycerol 1-phosphate + diphosphate. The protein operates within membrane lipid metabolism; glycerophospholipid metabolism. In terms of biological role, prenyltransferase that catalyzes the transfer of the geranylgeranyl moiety of geranylgeranyl diphosphate (GGPP) to the C3 hydroxyl of sn-glycerol-1-phosphate (G1P). This reaction is the first ether-bond-formation step in the biosynthesis of archaeal membrane lipids. The chain is Geranylgeranylglyceryl phosphate synthase from Methanococcus maripaludis (strain C6 / ATCC BAA-1332).